Here is a 1105-residue protein sequence, read N- to C-terminus: SWI/SNF complex subunit SMARCC1 (1105 aa).

Ala2 is subject to N-acetylalanine. Positions 28-302 (LAVYRRKDGG…PVSFRQRIST (275 aa)) are marR-like, BRCT and chromo domains module. The MarR-like domain occupies 38–164 (PATKFWESPE…IEKTLVQNNC (127 aa)). Residues 168–211 (PNIYLIPDIDLKLANKLKDIIKRHQGTFTDEKSKASHHIYPYSS) form the BRCT; N-terminus domain. Lys179 is covalently cross-linked (Glycyl lysine isopeptide (Lys-Gly) (interchain with G-Cter in SUMO2)). Residues 217 to 245 (EWLRPVMRKEKQVLVHWGFYPDSYDTWVH) form the Chromo domain. Residues 261–285 (KPWKVHVKWILDTDIFNEWMNEEDY) enclose the BRCT; C-terminus domain. The disordered stretch occupies residues 296 to 439 (FRQRISTKNE…DQSRSVDLGE (144 aa)). Positions 302–318 (TKNEEPVRSPERRDRKA) are enriched in basic and acidic residues. Phosphoserine occurs at positions 310, 328, and 330. A Phosphothreonine modification is found at Thr335. An N6-acetyllysine mark is found at Lys345 and Lys346. Ser350 carries the post-translational modification Phosphoserine. Position 354 is an N6-acetyllysine (Lys354). Ser357 is modified (phosphoserine). Lys359 is modified (N6-acetyllysine; alternate). Residue Lys359 forms a Glycyl lysine isopeptide (Lys-Gly) (interchain with G-Cter in SUMO2); alternate linkage. Residue Thr398 is modified to Phosphothreonine. The region spanning 449-546 (IIIPSYASWF…YQVDPESRPM (98 aa)) is the SWIRM domain. Ser573 bears the Phosphoserine mark. A Glycyl lysine isopeptide (Lys-Gly) (interchain with G-Cter in SUMO2) cross-link involves residue Lys592. Residues 618 to 669 (SAGREWTEQETLLLLEALEMYKDDWNKVSEHVGSRTQDECILHFLRLPIEDP) form the SANT domain. Lys739 participates in a covalent cross-link: Glycyl lysine isopeptide (Lys-Gly) (interchain with G-Cter in SUMO2). The segment at 745-860 (ARASGKVDPT…DTGKKKVEHE (116 aa)) is disordered. The span at 776 to 785 (AEEEKMEADP) shows a compositional bias: acidic residues. The span at 789–860 (QPEKAENKVE…DTGKKKVEHE (72 aa)) shows a compositional bias: basic and acidic residues. A Glycyl lysine isopeptide (Lys-Gly) (interchain with G-Cter in SUMO2) cross-link involves residue Lys796. Phosphoserine occurs at positions 822 and 825. Residues Lys829 and Lys856 each participate in a glycyl lysine isopeptide (Lys-Gly) (interchain with G-Cter in SUMO2) cross-link. Residues 914–946 (FEELETIMDREKEALEQQRQQLLTERQNFHMEQ) adopt a coiled-coil conformation. Lys948 is modified (N6-acetyllysine). Disordered regions lie at residues 956–1028 (QQME…PGQH) and 1041–1105 (IHPS…SAAP). Residues 957 to 993 (QMEQQQHGQNPQQAHQHSGGPGLAPLGAAGHPGMMPH) show a composition bias toward low complexity. Pro residues-rich tracts occupy residues 994 to 1017 (QQPP…PGQI) and 1048 to 1057 (PTPPGMPPMP). Asymmetric dimethylarginine is present on Arg1064. A compositionally biased stretch (pro residues) spans 1073 to 1105 (MYPPPPQQQPPPPPPADGVPPPPAPGPPASAAP).

It belongs to the SMARCC family. In terms of assembly, component of the multiprotein chromatin-remodeling complexes SWI/SNF: SWI/SNF-A (BAF), SWI/SNF-B (PBAF) and related complexes. The canonical complex contains a catalytic subunit (either SMARCA4/BRG1/BAF190A or SMARCA2/BRM/BAF190B) and at least SMARCE1, ACTL6A/BAF53, SMARCC1/BAF155, SMARCC2/BAF170, and SMARCB1/SNF5/BAF47. Other subunits specific to each of the complexes may also be present permitting several possible combinations developmentally and tissue specific. Component of the BAF complex, which includes at least actin (ACTB), ARID1A/BAF250A, ARID1B/BAF250B, SMARCA2/BRM, SMARCA4/BRG1, ACTL6A/BAF53, ACTL6B/BAF53B, SMARCE1/BAF57, SMARCC1/BAF155, SMARCC2/BAF170, SMARCB1/SNF5/INI1, and one or more SMARCD1/BAF60A, SMARCD2/BAF60B, or SMARCD3/BAF60C. In muscle cells, the BAF complex also contains DPF3. Component of neural progenitors-specific chromatin remodeling complex (npBAF complex) composed of at least, ARID1A/BAF250A or ARID1B/BAF250B, SMARCD1/BAF60A, SMARCD3/BAF60C, SMARCA2/BRM/BAF190B, SMARCA4/BRG1/BAF190A, SMARCB1/BAF47, SMARCC1/BAF155, SMARCE1/BAF57, SMARCC2/BAF170, PHF10/BAF45A, ACTL6A/BAF53A and actin. Component of neuron-specific chromatin remodeling complex (nBAF complex) composed of at least, ARID1A/BAF250A or ARID1B/BAF250B, SMARCD1/BAF60A, SMARCD3/BAF60C, SMARCA2/BRM/BAF190B, SMARCA4/BRG1/BAF190A, SMARCB1/BAF47, SMARCC1/BAF155, SMARCE1/BAF57, SMARCC2/BAF170, DPF1/BAF45B, DPF3/BAF45C, ACTL6B/BAF53B and actin. Component of the SWI/SNF-B (PBAF) chromatin remodeling complex, at least composed of SMARCA4/BRG1, SMARCB1/BAF47/SNF5, ACTL6A/BAF53A or ACTL6B/BAF53B, SMARCE1/BAF57, SMARCD1/BAF60A, SMARCD2/BAF60B, perhaps SMARCD3/BAF60C, SMARCC1/BAF155, SMARCC2/BAF170, PBRM1/BAF180, ARID2/BAF200 and actin. Component of SWI/SNF (GBAF) subcomplex, which includes at least BICRA or BICRAL (mutually exclusive), BRD9, SS18, SMARCA2/BRM, SMARCA4/BRG1/BAF190A, ACTL6A/BAF53, SMARCC1/BAF155, and SMARCD1/BAF60A. May also interact with the SIN3A histone deacetylase transcription repressor complex in conjunction with SMARCA2 and SMARCA4. The minimal complex composed of SMARCC1 and SMARCA4 seems to be able to associate with cyclin such as CCNE1 or transcription factors such as KLF1 or GATA1. Interacts with NR3C1 and SMARD1. Interacts with TRIP12; leading to disrupt interaction between TRIP12 and SMARCE1 and prevent SMARCE1 ubiquitination. Interacts with CEBPB (when not methylated). Interacts with KDM6B. Interacts with MKKS; the interaction takes place predominantly in the cytoplasm and may modulate SMARCC1 location. Interacts with DPF2. Interacts with PRDM1/BLIMP1. Interacts with DPF3a (isoform 2 of DPF3/BAF45C) and with HDGFL2 in a DPF3a-dependent manner. Phosphorylated on undefined residues at the G2/M transition by ERK1 and other kinases. This may contribute to cell cycle specific inactivation of remodeling complexes containing the phosphorylated protein. Expressed in brain, heart, muscle, placenta, lung, liver, muscle, kidney and pancreas.

The protein resides in the nucleus. It is found in the cytoplasm. Its function is as follows. Involved in transcriptional activation and repression of select genes by chromatin remodeling (alteration of DNA-nucleosome topology). Component of SWI/SNF chromatin remodeling complexes that carry out key enzymatic activities, changing chromatin structure by altering DNA-histone contacts within a nucleosome in an ATP-dependent manner. May stimulate the ATPase activity of the catalytic subunit of the complex. Belongs to the neural progenitors-specific chromatin remodeling complex (npBAF complex) and the neuron-specific chromatin remodeling complex (nBAF complex). During neural development a switch from a stem/progenitor to a postmitotic chromatin remodeling mechanism occurs as neurons exit the cell cycle and become committed to their adult state. The transition from proliferating neural stem/progenitor cells to postmitotic neurons requires a switch in subunit composition of the npBAF and nBAF complexes. As neural progenitors exit mitosis and differentiate into neurons, npBAF complexes which contain ACTL6A/BAF53A and PHF10/BAF45A, are exchanged for homologous alternative ACTL6B/BAF53B and DPF1/BAF45B or DPF3/BAF45C subunits in neuron-specific complexes (nBAF). The npBAF complex is essential for the self-renewal/proliferative capacity of the multipotent neural stem cells. The nBAF complex along with CREST plays a role regulating the activity of genes essential for dendrite growth. The sequence is that of SWI/SNF complex subunit SMARCC1 from Homo sapiens (Human).